A 464-amino-acid chain; its full sequence is 2-oxoadipate dioxygenase/decarboxylase (464 aa).

Residues H70, R74, and H226 each contribute to the 2-oxoadipate site. Fe(2+) is bound at residue H70. Fe(2+) contacts are provided by H226 and E294. V402 lines the 2-oxoadipate pocket.

The protein belongs to the 2-oxoadipate dioxygenase/decarboxylase family. It depends on Fe(2+) as a cofactor.

It catalyses the reaction 2-oxoadipate + O2 = (R)-2-hydroxyglutarate + CO2. It participates in amino-acid degradation. Its activity is regulated as follows. Inhibited by EDTA. Functionally, catalyzes the decarboxylation and hydroxylation of 2-oxoadipate (2OA) to form D-2-hydroxyglutarate (D-2-HGA). Is specific for 2-oxoadipate. Is involved in a D-lysine catabolic pathway. In Pseudomonas putida (strain ATCC 47054 / DSM 6125 / CFBP 8728 / NCIMB 11950 / KT2440), this protein is 2-oxoadipate dioxygenase/decarboxylase.